A 363-amino-acid polypeptide reads, in one-letter code: 3-dehydroquinate synthase (363 aa).

NAD(+) contacts are provided by residues 70 to 75 (SGETSK), 104 to 108 (GVIGD), 128 to 129 (TT), lysine 141, lysine 150, and 168 to 171 (TLDT). Positions 183, 245, and 262 each coordinate Zn(2+).

It belongs to the sugar phosphate cyclases superfamily. Dehydroquinate synthase family. It depends on Co(2+) as a cofactor. Requires Zn(2+) as cofactor. NAD(+) serves as cofactor.

Its subcellular location is the cytoplasm. It catalyses the reaction 7-phospho-2-dehydro-3-deoxy-D-arabino-heptonate = 3-dehydroquinate + phosphate. Its pathway is metabolic intermediate biosynthesis; chorismate biosynthesis; chorismate from D-erythrose 4-phosphate and phosphoenolpyruvate: step 2/7. In terms of biological role, catalyzes the conversion of 3-deoxy-D-arabino-heptulosonate 7-phosphate (DAHP) to dehydroquinate (DHQ). This is 3-dehydroquinate synthase from Alkaliphilus oremlandii (strain OhILAs) (Clostridium oremlandii (strain OhILAs)).